The following is a 283-amino-acid chain: Formamidopyrimidine-DNA glycosylase (283 aa).

Pro2 (schiff-base intermediate with DNA) is an active-site residue. The active-site Proton donor is Glu3. Catalysis depends on Lys61, which acts as the Proton donor; for beta-elimination activity. Residues His94, Arg113, and Lys159 each contribute to the DNA site. The FPG-type zinc finger occupies 245–279; that stretch reads DAYGREGESCRRCGAVMRREKFMNRSSFYCPKCQP. Catalysis depends on Arg269, which acts as the Proton donor; for delta-elimination activity.

It belongs to the FPG family. As to quaternary structure, monomer. Zn(2+) is required as a cofactor.

The enzyme catalyses Hydrolysis of DNA containing ring-opened 7-methylguanine residues, releasing 2,6-diamino-4-hydroxy-5-(N-methyl)formamidopyrimidine.. It catalyses the reaction 2'-deoxyribonucleotide-(2'-deoxyribose 5'-phosphate)-2'-deoxyribonucleotide-DNA = a 3'-end 2'-deoxyribonucleotide-(2,3-dehydro-2,3-deoxyribose 5'-phosphate)-DNA + a 5'-end 5'-phospho-2'-deoxyribonucleoside-DNA + H(+). In terms of biological role, involved in base excision repair of DNA damaged by oxidation or by mutagenic agents. Acts as a DNA glycosylase that recognizes and removes damaged bases. Has a preference for oxidized purines, such as 7,8-dihydro-8-oxoguanine (8-oxoG). Has AP (apurinic/apyrimidinic) lyase activity and introduces nicks in the DNA strand. Cleaves the DNA backbone by beta-delta elimination to generate a single-strand break at the site of the removed base with both 3'- and 5'-phosphates. In Mycolicibacterium paratuberculosis (strain ATCC BAA-968 / K-10) (Mycobacterium paratuberculosis), this protein is Formamidopyrimidine-DNA glycosylase.